The sequence spans 128 residues: Sulfurtransferase TusD (128 aa).

The active-site Cysteine persulfide intermediate is cysteine 78.

This sequence belongs to the DsrE/TusD family. In terms of assembly, heterohexamer, formed by a dimer of trimers. The hexameric TusBCD complex contains 2 copies each of TusB, TusC and TusD. The TusBCD complex interacts with TusE.

The protein localises to the cytoplasm. Part of a sulfur-relay system required for 2-thiolation of 5-methylaminomethyl-2-thiouridine (mnm(5)s(2)U) at tRNA wobble positions. Accepts sulfur from TusA and transfers it in turn to TusE. This chain is Sulfurtransferase TusD, found in Salmonella dublin (strain CT_02021853).